The sequence spans 64 residues: Large ribosomal subunit protein bL35 (64 aa).

This sequence belongs to the bacterial ribosomal protein bL35 family.

This is Large ribosomal subunit protein bL35 from Chlorobium chlorochromatii (strain CaD3).